A 447-amino-acid chain; its full sequence is Tubulin beta chain (447 aa).

GTP contacts are provided by glutamine 11, glutamate 69, serine 138, glycine 142, threonine 143, glycine 144, asparagine 204, and asparagine 226. Glutamate 69 provides a ligand contact to Mg(2+). The tract at residues 424 to 447 is disordered; that stretch reads QYQDAGVDEEEEEYEEEAPLEGEE. Residues 429–447 are compositionally biased toward acidic residues; sequence GVDEEEEEYEEEAPLEGEE.

The protein belongs to the tubulin family. In terms of assembly, dimer of alpha and beta chains. A typical microtubule is a hollow water-filled tube with an outer diameter of 25 nm and an inner diameter of 15 nM. Alpha-beta heterodimers associate head-to-tail to form protofilaments running lengthwise along the microtubule wall with the beta-tubulin subunit facing the microtubule plus end conferring a structural polarity. Microtubules usually have 13 protofilaments but different protofilament numbers can be found in some organisms and specialized cells. Mg(2+) serves as cofactor.

Its subcellular location is the cytoplasm. The protein localises to the cytoskeleton. In terms of biological role, tubulin is the major constituent of microtubules, a cylinder consisting of laterally associated linear protofilaments composed of alpha- and beta-tubulin heterodimers. Microtubules grow by the addition of GTP-tubulin dimers to the microtubule end, where a stabilizing cap forms. Below the cap, tubulin dimers are in GDP-bound state, owing to GTPase activity of alpha-tubulin. The sequence is that of Tubulin beta chain (tub-2) from Neurospora crassa (strain ATCC 24698 / 74-OR23-1A / CBS 708.71 / DSM 1257 / FGSC 987).